A 491-amino-acid chain; its full sequence is 3-octaprenyl-4-hydroxybenzoate carboxy-lyase (491 aa).

N172 is a Mn(2+) binding site. Prenylated FMN-binding positions include 175 to 177 (IYR), 189 to 191 (RWL), and 194 to 195 (RG). E238 is a Mn(2+) binding site. Residue D287 is the Proton donor of the active site.

This sequence belongs to the UbiD family. As to quaternary structure, homohexamer. It depends on prenylated FMN as a cofactor. The cofactor is Mn(2+).

The protein localises to the cell membrane. It catalyses the reaction a 4-hydroxy-3-(all-trans-polyprenyl)benzoate + H(+) = a 2-(all-trans-polyprenyl)phenol + CO2. Its pathway is cofactor biosynthesis; ubiquinone biosynthesis. Catalyzes the decarboxylation of 3-octaprenyl-4-hydroxy benzoate to 2-octaprenylphenol, an intermediate step in ubiquinone biosynthesis. This chain is 3-octaprenyl-4-hydroxybenzoate carboxy-lyase, found in Histophilus somni (strain 129Pt) (Haemophilus somnus).